A 476-amino-acid polypeptide reads, in one-letter code: MYVFPKISLRPEVENYLKESFLNEEAVSASSRQEAERKFETLLLRLSHPPSMTTVRVNTHLGSVQHVRGLLLEELQKQFGESSIPVVQHPALPDVLLIPMTGPRKNIERQQGEVIVGAQCGNAVLRGAHVYVPGIVSASKFMKAGDVISVYSDINGKCKKGAKEFDGTKVFLGNGISELSRKDIFNGLPDLKGIGIRMTEPIYLSPSFDNVLPSYIFLQNLPSTVVAHVLDPQPGEKILDMCAAPGGKTTHTAALMQDKGEVIALDKILTKVNKLKQNASLLGLHSIRAFCFDATKALKLDTTDGIEGGPPFLPESFDRIILDAPCSGMGQRPNMACTWTLKEVTSYQPLQRKLLHVAVQLLKPGGVLVYSTCTITLAENEEQVAWALRTFPCLQLQPQEPQIGGEGMVGAGLTLEQLKQLQRFDPSVVPLQNMDTDSLGEARREDMIWLANKDCIGFFIAKFLKCQSTKAKVSQK.

The PUA domain occupies 111–203 (QGEVIVGAQC…IGIRMTEPIY (93 aa)). S-adenosyl-L-methionine contacts are provided by residues 242-248 (CAAPGGK), Asp266, Asp293, and Asp323. Catalysis depends on Cys373, which acts as the Nucleophile. An N6-acetyllysine modification is found at Lys419.

It belongs to the class I-like SAM-binding methyltransferase superfamily. RsmB/NOP family.

The protein localises to the cytoplasm. The catalysed reaction is cytidine(72) in tRNA(Thr) + S-adenosyl-L-methionine = 5-methylcytidine(72) in tRNA(Thr) + S-adenosyl-L-homocysteine + H(+). It carries out the reaction cytidine(72) in tRNA(Cys) + S-adenosyl-L-methionine = 5-methylcytidine(72) in tRNA(Cys) + S-adenosyl-L-homocysteine + H(+). S-adenosyl-L-methionine-dependent methyltransferase that specifically methylates the C5 position of cytosine 72 in tRNA(Thr)(TGT) and tRNA(Cys)(GCA). In vitro also methylates tRNA(Thr)(AGT). Methylation requires, in the acceptor stem region, the presence of the 3'-CCA terminus, the target site C72, the discriminator base U73, and the second and third base pairs (2:71 and 3:70) in the tRNA substrates. The protein is tRNA (cytosine(72)-C(5))-methyltransferase NSUN6 of Mus musculus (Mouse).